We begin with the raw amino-acid sequence, 505 residues long: Glutamate--tRNA ligase (505 aa).

Positions 11 to 21 match the 'HIGH' region motif; the sequence is PSPTGPLHIGG. The 'KMSKS' region motif lies at 260-264; that stretch reads KLSKR. Lysine 263 is an ATP binding site.

Belongs to the class-I aminoacyl-tRNA synthetase family. Glutamate--tRNA ligase type 1 subfamily. As to quaternary structure, monomer.

It is found in the cytoplasm. The enzyme catalyses tRNA(Glu) + L-glutamate + ATP = L-glutamyl-tRNA(Glu) + AMP + diphosphate. Its function is as follows. Catalyzes the attachment of glutamate to tRNA(Glu) in a two-step reaction: glutamate is first activated by ATP to form Glu-AMP and then transferred to the acceptor end of tRNA(Glu). The chain is Glutamate--tRNA ligase from Christiangramia forsetii (strain DSM 17595 / CGMCC 1.15422 / KT0803) (Gramella forsetii).